The sequence spans 216 residues: NKG2-D type II integral membrane protein (216 aa).

Topologically, residues 1–51 (MGWIRGRRSRHSWEMSEFHNYNLDLKKSDFSTRWQKQRCPVVKSKCRENAS) are cytoplasmic. A helical; Signal-anchor for type II membrane protein transmembrane segment spans residues 52-72 (PFFFCCFIAVAMGIRFIIMVT). Residues 73-216 (IWSAVFLNSL…NTYICMQRTV (144 aa)) lie on the Extracellular side of the membrane. Intrachain disulfides connect cysteine 96–cysteine 105 and cysteine 99–cysteine 110. One can recognise a C-type lectin domain in the interval 98–213 (PCPKNWICYK…STPNTYICMQ (116 aa)). Asparagine 115, asparagine 131, asparagine 163, and asparagine 202 each carry an N-linked (GlcNAc...) asparagine glycan. 2 cysteine pairs are disulfide-bonded: cysteine 127–cysteine 211 and cysteine 189–cysteine 203.

Homodimer; disulfide-linked. Heterohexamer composed of two subunits of KLRK1 and four subunits of HCST/DAP10. Interacts (via transmembrane domain) with HCST/DAP10 (via transmembrane domain); the interaction is required for KLRK1 NK cell surface and induces NK cell-mediated cytotoxicity. Can form disulfide-bonded heterodimer with CD94. Interacts with CEACAM1; recruits PTPN6 that dephosphorylates VAV1. In terms of tissue distribution, natural killer cells.

The protein localises to the cell membrane. Functions as an activating and costimulatory receptor involved in immunosurveillance upon binding to various cellular stress-inducible ligands displayed at the surface of autologous tumor cells and virus-infected cells. Provides both stimulatory and costimulatory innate immune responses on activated killer (NK) cells, leading to cytotoxic activity. Acts as a costimulatory receptor for T-cell receptor (TCR) in CD8(+) T-cell-mediated adaptive immune responses by amplifying T-cell activation. Stimulates perforin-mediated elimination of ligand-expressing tumor cells. Signaling involves calcium influx, culminating in the expression of TNF-alpha. Participates in NK cell-mediated bone marrow graft rejection. May play a regulatory role in differentiation and survival of NK cells. Binds to ligands belonging to various subfamilies of MHC class I-related glycoproteins. The sequence is that of NKG2-D type II integral membrane protein (KLRK1) from Pan troglodytes (Chimpanzee).